The following is a 159-amino-acid chain: D-aminoacyl-tRNA deacylase (159 aa).

A Gly-cisPro motif, important for rejection of L-amino acids motif is present at residues 146-147 (GP).

Belongs to the DTD family. As to quaternary structure, homodimer.

It is found in the cytoplasm. It carries out the reaction glycyl-tRNA(Ala) + H2O = tRNA(Ala) + glycine + H(+). The catalysed reaction is a D-aminoacyl-tRNA + H2O = a tRNA + a D-alpha-amino acid + H(+). In terms of biological role, an aminoacyl-tRNA editing enzyme that deacylates mischarged D-aminoacyl-tRNAs. Also deacylates mischarged glycyl-tRNA(Ala), protecting cells against glycine mischarging by AlaRS. Acts via tRNA-based rather than protein-based catalysis; rejects L-amino acids rather than detecting D-amino acids in the active site. By recycling D-aminoacyl-tRNA to D-amino acids and free tRNA molecules, this enzyme counteracts the toxicity associated with the formation of D-aminoacyl-tRNA entities in vivo and helps enforce protein L-homochirality. This Bifidobacterium animalis subsp. lactis (strain AD011) protein is D-aminoacyl-tRNA deacylase.